The primary structure comprises 85 residues: Large ribosomal subunit protein bL27 (85 aa).

A disordered region spans residues 1 to 21; it reads MAHKKGVGSSRNGRDSDGQRL.

It belongs to the bacterial ribosomal protein bL27 family.

The protein is Large ribosomal subunit protein bL27 of Citrifermentans bemidjiense (strain ATCC BAA-1014 / DSM 16622 / JCM 12645 / Bem) (Geobacter bemidjiensis).